The chain runs to 413 residues: Imidazolonepropionase (413 aa).

The Fe(3+) site is built by His-77 and His-79. His-77 and His-79 together coordinate Zn(2+). 4-imidazolone-5-propanoate-binding residues include Arg-86, Tyr-149, and His-182. Residue Tyr-149 participates in N-formimidoyl-L-glutamate binding. His-247 is a Fe(3+) binding site. His-247 serves as a coordination point for Zn(2+). Gln-250 lines the 4-imidazolone-5-propanoate pocket. Residue Asp-322 participates in Fe(3+) binding. Asp-322 lines the Zn(2+) pocket. 2 residues coordinate N-formimidoyl-L-glutamate: Asn-324 and Gly-326. 4-imidazolone-5-propanoate is bound at residue Thr-327.

The protein belongs to the metallo-dependent hydrolases superfamily. HutI family. Zn(2+) is required as a cofactor. It depends on Fe(3+) as a cofactor.

Its subcellular location is the cytoplasm. The catalysed reaction is 4-imidazolone-5-propanoate + H2O = N-formimidoyl-L-glutamate. It functions in the pathway amino-acid degradation; L-histidine degradation into L-glutamate; N-formimidoyl-L-glutamate from L-histidine: step 3/3. Catalyzes the hydrolytic cleavage of the carbon-nitrogen bond in imidazolone-5-propanoate to yield N-formimidoyl-L-glutamate. It is the third step in the universal histidine degradation pathway. The protein is Imidazolonepropionase of Chromobacterium violaceum (strain ATCC 12472 / DSM 30191 / JCM 1249 / CCUG 213 / NBRC 12614 / NCIMB 9131 / NCTC 9757 / MK).